A 554-amino-acid chain; its full sequence is Pigment biosynthesis transcriptional activator pigB (554 aa).

Residues 1–21 (MFTSSSPEQRKPRQSRQLPGA) are disordered. Positions 23–40 (CEECRRKKLRCDRQQPQC) form a DNA-binding region, zn(2)-C6 fungal-type.

The protein localises to the nucleus. Functionally, transcription factor; part of the gene cluster that mediates the biosynthesis of azaphilone pigments (MonAzPs), a complex mixture of compounds with a common azaphilone skeleton very widely used as food colorants. Positively regulates the expression of the azaphilone pigments (MonAzPs) gene cluster. The chain is Pigment biosynthesis transcriptional activator pigB from Monascus ruber (Mold).